The primary structure comprises 333 residues: MSWIKEGELSLWERFCANIIKAGPVPKHIAFIMDGNRRYAKKCQVERQEGHTQGFNKLAETLRWCLNLGILEVTVYAFSIENFKRSKSEVDGLLDLARQKFSCLMEEQEKLQKHGVCIRVLGDLHLLPLDLQEKIAHAIQATKNYNKCFLNVCFAYTSRHEIANAVREMAWGVEQGLLEPSDVSESLLDKCLYSNHSPHPDILIRTSGEVRLSDFLLWQTSHSCLVFQPVLWPEYTFWNLCEAILQFQRNHGALQKARDMYAEERKRRQLERDQAAVTEQLLREGLQASGDAQLRRTRLHKLSTKREERVQGFLKALELKRANWLALWGTASA.

Aspartate 34, glycine 35, arginine 37, arginine 38, and arginine 85 together coordinate (2E,6E)-farnesyl diphosphate. Aspartate 34 serves as a coordination point for Mg(2+). Residues arginine 38, arginine 85, arginine 205, arginine 211, and serine 213 each coordinate isopentenyl diphosphate.

This sequence belongs to the UPP synthase family. The active dehydrodolichyl diphosphate synthase complex is a heterotetramer composed of a dimer of heterodimer of DHDDS and NUS1. Interacts with NPC2. Mg(2+) is required as a cofactor.

The protein resides in the endoplasmic reticulum membrane. The catalysed reaction is n isopentenyl diphosphate + (2E,6E)-farnesyl diphosphate = a di-trans,poly-cis-polyprenyl diphosphate + n diphosphate. The protein operates within protein modification; protein glycosylation. It functions in the pathway lipid metabolism. Its function is as follows. With NUS1, forms the dehydrodolichyl diphosphate synthase (DDS) complex, an essential component of the dolichol monophosphate (Dol-P) biosynthetic machinery. Both subunits contribute to enzymatic activity, i.e. condensation of multiple copies of isopentenyl pyrophosphate (IPP) to farnesyl pyrophosphate (FPP) to produce dehydrodolichyl diphosphate (Dedol-PP), a precursor of dolichol phosphate which is utilized as a sugar carrier in protein glycosylation in the endoplasmic reticulum (ER). Synthesizes long-chain polyprenols, mostly of C95 and C100 chain length. Regulates the glycosylation and stability of nascent NPC2, thereby promoting trafficking of LDL-derived cholesterol. The protein is Dehydrodolichyl diphosphate synthase complex subunit Dhdds of Mus musculus (Mouse).